A 237-amino-acid polypeptide reads, in one-letter code: Sulfhydrogenase 2 subunit delta (237 aa).

[4Fe-4S] cluster is bound by residues Cys-11, Cys-14, Cys-83, Cys-132, Cys-160, Cys-163, Cys-170, and Cys-179. [3Fe-4S] cluster-binding residues include Cys-188, Cys-192, Cys-199, and Cys-202.

The protein belongs to the [NiFe]/[NiFeSe] hydrogenase small subunit family. In terms of assembly, dimer of heterotetramer of alpha, beta, gamma and delta subunits. The nickel-containing alpha and delta subunits constitute the hydrogenase activity. The beta and gamma subunits (flavin-containing dimer) constitute the sulfur reductase activity. Ni(2+) serves as cofactor. Requires [4Fe-4S] cluster as cofactor. It depends on [3Fe-4S] cluster as a cofactor.

It localises to the cytoplasm. It carries out the reaction H2 + NADP(+) = NADPH + H(+). It catalyses the reaction H2 + NAD(+) = NADH + H(+). Functionally, part of a bifunctional enzyme complex that functions as a hydrogen-evolving hydrogenase with sulfur-reducing activity. May play a role in hydrogen cycling during fermentative growth. Activity exhibited with NAD in addition to NADPH. The alpha and delta subunits form the hydrogenase component that catalyzes the reduction of protons to evolve hydrogen. The sequence is that of Sulfhydrogenase 2 subunit delta from Pyrococcus furiosus (strain ATCC 43587 / DSM 3638 / JCM 8422 / Vc1).